A 707-amino-acid chain; its full sequence is Nucleolin 2 (707 aa).

Residues 1-446 (MGKSSKKSAV…TPASNQNQAT (446 aa)) are disordered. 2 stretches are compositionally biased toward basic and acidic residues: residues 30–40 (RNAEDEIEKAV) and 47–60 (TVRE…EEAK). Acidic residues-rich tracts occupy residues 75–85 (SSEEDSSESEE), 108–120 (SSDD…SSDD), and 144–153 (DSSDESLSDD). The span at 158–170 (KPAAPLKKPVALA) shows a compositional bias: low complexity. Acidic residues-rich tracts occupy residues 219-232 (DSSD…SDED), 248-263 (SESS…DDEA), and 271-287 (ESSD…SDSD). Residues 300–311 (LTKDTKKGQSKD) are compositionally biased toward basic and acidic residues. A compositionally biased stretch (acidic residues) spans 312–326 (ESEDSSDESSEESGD). Residues 336-347 (STTSGTTKPSPK) show a composition bias toward low complexity. Acidic residues predominate over residues 355–370 (SDDESDEDDSSDESSD). Low complexity predominate over residues 376–394 (KQTQAKKQAPVAQESSSSD). The segment covering 395 to 406 (ESSEEDSDMESD) has biased composition (acidic residues). Basic and acidic residues predominate over residues 407-417 (EPAKTPQKKET). A compositionally biased stretch (polar residues) spans 420–429 (SVGSNKSATK). Positions 449–525 (KTLFVGNLPY…RPVRLDLARE (77 aa)) constitute an RRM 1 domain. Disordered stretches follow at residues 527 to 546 (GAYT…PAQS) and 629 to 707 (RPRP…GDDD). Residues 549 to 630 (NTIFIKGFDT…YSLYVDEARP (82 aa)) form the RRM 2 domain. Basic and acidic residues predominate over residues 657–681 (GRGDGSRGRGDRGRGRGFGRGDRGH).

It is found in the nucleus. Its subcellular location is the nucleolus. Its function is as follows. Involved in pre-rRNA processing and ribosome assembly. The protein is Nucleolin 2 of Oryza sativa subsp. japonica (Rice).